The primary structure comprises 159 residues: Phosphopantetheine adenylyltransferase (159 aa).

Thr-10 serves as a coordination point for substrate. ATP contacts are provided by residues 10-11 (TF) and His-18. Substrate-binding residues include Lys-42, Leu-74, and Arg-88. ATP is bound by residues 89–91 (GLR), Glu-99, and 124–130 (YSFISSS).

Belongs to the bacterial CoaD family. Homohexamer. Mg(2+) serves as cofactor.

It is found in the cytoplasm. It catalyses the reaction (R)-4'-phosphopantetheine + ATP + H(+) = 3'-dephospho-CoA + diphosphate. The protein operates within cofactor biosynthesis; coenzyme A biosynthesis; CoA from (R)-pantothenate: step 4/5. In terms of biological role, reversibly transfers an adenylyl group from ATP to 4'-phosphopantetheine, yielding dephospho-CoA (dPCoA) and pyrophosphate. The chain is Phosphopantetheine adenylyltransferase from Campylobacter hominis (strain ATCC BAA-381 / DSM 21671 / CCUG 45161 / LMG 19568 / NCTC 13146 / CH001A).